Reading from the N-terminus, the 259-residue chain is Translation initiation factor IF-2, chloroplastic (259 aa).

Residues 171 to 259 (LRAPIVAVLG…LLIIAADEGI (89 aa)) form the tr-type G domain. 180–187 (GHVNHGKT) is a GTP binding site.

This sequence belongs to the TRAFAC class translation factor GTPase superfamily. Classic translation factor GTPase family. IF-2 subfamily.

It is found in the plastid. The protein resides in the chloroplast. In terms of biological role, one of the essential components for the initiation of protein synthesis. Protects formylmethionyl-tRNA from spontaneous hydrolysis and promotes its binding to the 30S ribosomal subunits. Also involved in the hydrolysis of GTP during the formation of the 70S ribosomal complex. The sequence is that of Translation initiation factor IF-2, chloroplastic (infB) from Galdieria sulphuraria (Red alga).